A 249-amino-acid polypeptide reads, in one-letter code: Benzil reductase ((S)-benzoin forming) (249 aa).

NADP(+) is bound by residues I6, N87, Y154, K158, V189, and T191. Catalysis depends on Y154, which acts as the Proton acceptor.

It belongs to the short-chain dehydrogenases/reductases (SDR) family.

Its subcellular location is the cytoplasm. It carries out the reaction (S)-benzoin + NADP(+) = benzil + NADPH + H(+). It catalyses the reaction 2-hydroxy-1-phenyl-1-propanone + NADP(+) = 1-phenyl-1,2-propanedione + NADPH + H(+). With respect to regulation, inhibited by Cibacron blue 3GA, a general SDR family inhibitor. Its function is as follows. Reduces benzil stereospecifically to (S)-benzoin. Can also reduce 1-phenyl-1,2-propanedione, 1,4-naphthoquinone, 1-(4-methyl-phenyl)-2-phenyl-ethane-1,2-dione, 1-(4-fluoro-phenyl)-2-phenyl-ethane-1,2-dione, methyl benzoylformate and p-nitrobenzaldehyde in decreasing order. The protein is Benzil reductase ((S)-benzoin forming) of Bacillus cereus.